A 283-amino-acid chain; its full sequence is DegV domain-containing protein lmo2514 (283 aa).

Residues 5 to 282 enclose the DegV domain; that stretch reads IAVVTDSTTY…EGALGLTWSI (278 aa). Residues Ser63 and Ser96 each coordinate hexadecanoate.

Functionally, may bind long-chain fatty acids, such as palmitate, and may play a role in lipid transport or fatty acid metabolism. The chain is DegV domain-containing protein lmo2514 from Listeria monocytogenes serovar 1/2a (strain ATCC BAA-679 / EGD-e).